Consider the following 188-residue polypeptide: Elongation factor P (188 aa).

Belongs to the elongation factor P family.

It localises to the cytoplasm. It participates in protein biosynthesis; polypeptide chain elongation. Its function is as follows. Involved in peptide bond synthesis. Stimulates efficient translation and peptide-bond synthesis on native or reconstituted 70S ribosomes in vitro. Probably functions indirectly by altering the affinity of the ribosome for aminoacyl-tRNA, thus increasing their reactivity as acceptors for peptidyl transferase. The sequence is that of Elongation factor P from Methylobacterium radiotolerans (strain ATCC 27329 / DSM 1819 / JCM 2831 / NBRC 15690 / NCIMB 10815 / 0-1).